Reading from the N-terminus, the 422-residue chain is MILVKDAIINGKKQDLLVEGNIIKKIGNISISEVSKDETEIIDGKNCVLIPGLVNTHTHVPMSLFRGVADDIPLMEWLSGHIWPMESKLNEKIVYAGTLLGTVEMIKSGTTAFNDMYFFLDSIIKAVDETGIRSTIAYGMIDLFDEEKREKELKTARKSLETIKNLNNSRITGALGPHAPYTCSKELLESTNTLAREYNVPIHIHMNETLDEINQVVEKTGMRPFEYLNSFGFFNDVNTICAHCVHLSDSEIQIMKEKNIFAAHNPVSNLKLASGVSPVLKLLENNVPVTLGTDGCGSNNNMNLFEEIKAAALIHKGVNLNPVAVTAKEAFEFATLNGAKALNINSGEIKEGKLADFVIINMKKPYLTPKENIESHLVYSFNGVVDTVVIDGKIVLNDGKMVTIDEEKVYELAEEAYLELTK.

Zn(2+)-binding residues include histidine 57 and histidine 59. The substrate site is built by glutamate 86 and histidine 178. Histidine 205 is a binding site for Zn(2+). Substrate contacts are provided by glutamate 208 and aspartate 294. Aspartate 294 is a Zn(2+) binding site.

It belongs to the metallo-dependent hydrolases superfamily. MTA/SAH deaminase family. As to quaternary structure, homotetramer. It depends on Zn(2+) as a cofactor.

It catalyses the reaction 5'-deoxyadenosine + H2O + H(+) = 5'-deoxyinosine + NH4(+). The catalysed reaction is S-adenosyl-L-homocysteine + H2O + H(+) = S-inosyl-L-homocysteine + NH4(+). The enzyme catalyses S-methyl-5'-thioadenosine + H2O + H(+) = S-methyl-5'-thioinosine + NH4(+). It carries out the reaction adenosine + H2O + H(+) = inosine + NH4(+). It functions in the pathway amino-acid biosynthesis; S-adenosyl-L-methionine biosynthesis. In terms of biological role, catalyzes the deamination of three SAM-derived enzymatic products, namely 5'-deoxyadenosine, S-adenosyl-L-homocysteine, and 5'-methylthioadenosine, to produce the inosine analogs. Can also deaminate adenosine. The preferred substrate for this enzyme is 5'-deoxyadenosine, but all these substrates are efficiently deaminated. Likely functions in a S-adenosyl-L-methionine (SAM) recycling pathway from S-adenosyl-L-homocysteine (SAH) produced from SAM-dependent methylation reactions. May also be involved in the recycling of 5'-deoxyadenosine, whereupon the 5'-deoxyribose moiety of 5'-deoxyinosine is further metabolized to deoxyhexoses used for the biosynthesis of aromatic amino acids in methanogens. The protein is 5'-deoxyadenosine deaminase of Methanococcus maripaludis (strain C7 / ATCC BAA-1331).